Consider the following 211-residue polypeptide: Intermembrane phospholipid transport system binding protein MlaC (211 aa).

The first 21 residues, Met1–Ala21, serve as a signal peptide directing secretion.

The protein belongs to the MlaC/ttg2D family. In terms of assembly, interacts with the MlaA-OmpF outer membrane complex and with the inner membrane ABC transporter complex MlaFEDB, via direct interaction with MlaD.

The protein localises to the periplasm. In terms of biological role, involved in a phospholipid transport pathway that maintains lipid asymmetry in the outer membrane by retrograde trafficking of phospholipids from the outer membrane to the inner membrane. May transfer phospholipid across the periplasmic space and deliver it to the MlaFEDB complex at the inner membrane. The polypeptide is Intermembrane phospholipid transport system binding protein MlaC (Escherichia coli (strain K12)).